We begin with the raw amino-acid sequence, 315 residues long: Cobalamin biosynthesis protein CobD (315 aa).

A run of 5 helical transmembrane segments spans residues 54–74 (GLLF…ILFL), 78–98 (IAYW…LAMT), 152–172 (ADGV…LALM), 203–223 (IANF…SFIL), and 295–315 (LLYM…LLLF).

This sequence belongs to the CobD/CbiB family.

The protein localises to the cell membrane. Its pathway is cofactor biosynthesis; adenosylcobalamin biosynthesis. Functionally, converts cobyric acid to cobinamide by the addition of aminopropanol on the F carboxylic group. This is Cobalamin biosynthesis protein CobD from Listeria monocytogenes serovar 1/2a (strain ATCC BAA-679 / EGD-e).